We begin with the raw amino-acid sequence, 268 residues long: Tryptophan synthase alpha chain (268 aa).

Catalysis depends on proton acceptor residues Glu49 and Asp60.

Belongs to the TrpA family. In terms of assembly, tetramer of two alpha and two beta chains.

It carries out the reaction (1S,2R)-1-C-(indol-3-yl)glycerol 3-phosphate + L-serine = D-glyceraldehyde 3-phosphate + L-tryptophan + H2O. It functions in the pathway amino-acid biosynthesis; L-tryptophan biosynthesis; L-tryptophan from chorismate: step 5/5. Its function is as follows. The alpha subunit is responsible for the aldol cleavage of indoleglycerol phosphate to indole and glyceraldehyde 3-phosphate. In Escherichia coli (strain 55989 / EAEC), this protein is Tryptophan synthase alpha chain.